Consider the following 538-residue polypeptide: Carboxypeptidase 2 (538 aa).

An N-terminal signal peptide occupies residues 1–21 (MVAYRFLTLISLGLGSHCASA). N46 is a glycosylation site (N-linked (GlcNAc...) asparagine). Residues 53–76 (PAFTSPGTVPRGFSDGTSGPTRDE) form a disordered region. The Peptidase M14 domain occupies 71–351 (GPTRDETMEG…VMVKSILQTA (281 aa)). Zn(2+)-binding residues include H136, E139, and H224. The active-site Proton donor/acceptor is the E322. N393 and N459 each carry an N-linked (GlcNAc...) asparagine glycan.

It belongs to the peptidase M14 family. Zn(2+) serves as cofactor.

It localises to the secreted. Its function is as follows. Extracellular metalloprotease that contributes to pathogenicity. The polypeptide is Carboxypeptidase 2 (MCPB) (Trichophyton equinum (Horse ringworm fungus)).